The following is a 499-amino-acid chain: Putative antiporter subunit mnhD2 (499 aa).

14 consecutive transmembrane segments (helical) span residues 3 to 23 (LSNL…ILVF), 33 to 53 (YLYL…LIYV), 79 to 99 (LSLI…AYGF), 109 to 129 (YHLP…FLTS), 131 to 151 (LFNL…LITL), 162 to 182 (IIYV…IGLL), 210 to 230 (ISLI…FMWL), 241 to 261 (LAAL…IRFF), 272 to 292 (IHPL…IGVI), 309 to 329 (IGFI…GAIF), 331 to 351 (LVND…LVYI), 370 to 390 (FGVA…FSGF), 404 to 424 (GNYI…YSLF), and 452 to 472 (ILSI…VVLN).

The protein belongs to the CPA3 antiporters (TC 2.A.63) subunit D family. As to quaternary structure, may form a heterooligomeric complex that consists of seven subunits: mnhA2, mnhB2, mnhC2, mnhD2, mnhE2, mnhF2 and mnhG2.

It is found in the cell membrane. Its function is as follows. Expression of the mnh2 operon in E.coli is not able to catalyze Na(+)Li(+)/H(+) antiport. It does however confer higher growth rates than the control strain at up to pH 9.5. The operon may encode an NADH-ubiquinone oxidoreductase. This chain is Putative antiporter subunit mnhD2 (mnhD2), found in Staphylococcus aureus.